A 277-amino-acid chain; its full sequence is Shikimate dehydrogenase (NADP(+)) (277 aa).

Shikimate contacts are provided by residues 20 to 22 (SLS) and T67. K71 serves as the catalytic Proton acceptor. NADP(+) is bound at residue D83. Shikimate is bound by residues N92 and D107. Residues 131–135 (GAGGV) and I219 contribute to the NADP(+) site. Y221 provides a ligand contact to shikimate. G242 provides a ligand contact to NADP(+).

This sequence belongs to the shikimate dehydrogenase family. In terms of assembly, homodimer.

The catalysed reaction is shikimate + NADP(+) = 3-dehydroshikimate + NADPH + H(+). The protein operates within metabolic intermediate biosynthesis; chorismate biosynthesis; chorismate from D-erythrose 4-phosphate and phosphoenolpyruvate: step 4/7. Functionally, involved in the biosynthesis of the chorismate, which leads to the biosynthesis of aromatic amino acids. Catalyzes the reversible NADPH linked reduction of 3-dehydroshikimate (DHSA) to yield shikimate (SA). The sequence is that of Shikimate dehydrogenase (NADP(+)) from Pelobacter propionicus (strain DSM 2379 / NBRC 103807 / OttBd1).